The chain runs to 426 residues: Histidine--tRNA ligase (426 aa).

Belongs to the class-II aminoacyl-tRNA synthetase family. In terms of assembly, homodimer.

Its subcellular location is the cytoplasm. The enzyme catalyses tRNA(His) + L-histidine + ATP = L-histidyl-tRNA(His) + AMP + diphosphate + H(+). This is Histidine--tRNA ligase from Streptococcus pyogenes serotype M18 (strain MGAS8232).